We begin with the raw amino-acid sequence, 327 residues long: DNA-directed RNA polymerase subunit alpha (327 aa).

Residues 1-233 (MQNVLKSFLT…HQLAAFVDLK (233 aa)) form an alpha N-terminal domain (alpha-NTD) region. An alpha C-terminal domain (alpha-CTD) region spans residues 247–327 (VNPLLLRPVE…GWPPADLTDQ (81 aa)).

It belongs to the RNA polymerase alpha chain family. Homodimer. The RNAP catalytic core consists of 2 alpha, 1 beta, 1 beta' and 1 omega subunit. When a sigma factor is associated with the core the holoenzyme is formed, which can initiate transcription.

The enzyme catalyses RNA(n) + a ribonucleoside 5'-triphosphate = RNA(n+1) + diphosphate. In terms of biological role, DNA-dependent RNA polymerase catalyzes the transcription of DNA into RNA using the four ribonucleoside triphosphates as substrates. This chain is DNA-directed RNA polymerase subunit alpha, found in Coxiella burnetii (strain CbuK_Q154) (Coxiella burnetii (strain Q154)).